Here is a 908-residue protein sequence, read N- to C-terminus: Glutamate receptor ionotropic, kainate 2 (908 aa).

The signal sequence occupies residues Met-1–Gly-31. Residues Thr-32 to Pro-561 lie on the Extracellular side of the membrane. Asn-67, Asn-73, Asn-275, Asn-378, Asn-412, Asn-423, and Asn-430 each carry an N-linked (GlcNAc...) asparagine glycan. Cys-96 and Cys-347 are oxidised to a cystine. L-glutamate contacts are provided by Pro-516, Ala-518, and Arg-523. The N-linked (GlcNAc...) asparagine glycan is linked to Asn-546. A helical transmembrane segment spans residues Asp-562–Ala-582. Topologically, residues Arg-583–Gly-638 are cytoplasmic. A helical membrane pass occupies residues Ile-639 to Leu-659. The Extracellular portion of the chain corresponds to Thr-660 to Asn-819. The L-glutamate site is built by Ala-689, Thr-690, and Glu-738. The cysteines at positions 750 and 804 are disulfide-linked. A glycan (N-linked (GlcNAc...) asparagine) is linked at Asn-751. The helical transmembrane segment at Ile-820 to Gly-840 threads the bilayer. Topologically, residues Glu-841–Ala-908 are cytoplasmic. Phosphoserine; by PKC is present on residues Ser-846 and Ser-868. Residue Lys-886 forms a Glycyl lysine isopeptide (Lys-Gly) (interchain with G-Cter in SUMO1) linkage.

The protein belongs to the glutamate-gated ion channel (TC 1.A.10.1) family. GRIK2 subfamily. As to quaternary structure, homotetramer and heterotetramer with GRIK5. Tetramers may be formed by the dimerization of dimers. Assembles into a kainate-gated homomeric channel that does not bind AMPA. Can form functional heteromeric receptors with GRIK3. Forms a heteromeric complex with GRIK4 and GRIK5. Interacts with DLG4. Interacts (via C-terminus) with KLHL17 (via kelch repeats); the interaction targets GRIK2 for degradation via ubiquitin-proteasome pathway. Interacts with NETO2. Post-translationally, sumoylation mediates kainate receptor-mediated endocytosis and regulates synaptic transmission. Sumoylation is enhanced by PIAS3 and desumoylated by SENP1. Ubiquitinated. Ubiquitination regulates the GRIK2 levels at the synapse by leading kainate receptor degradation through proteasome. In terms of processing, phosphorylated by PKC at Ser-868 upon agonist activation, this directly enhance sumoylation. Expressed in the hippocampal mossy fiber synapses (at protein level). Most abundant in the cerebellum and the hypothalamus. Expressed in a proportion of dorsal root ganglion (DRG) neurons (13.6%); predominantly small diameter DRG neurons (75%) with the remainder expressed in medium diameter DRG neurons.

It localises to the cell membrane. The protein localises to the postsynaptic cell membrane. It catalyses the reaction Ca(2+)(in) = Ca(2+)(out). The enzyme catalyses Na(+)(in) = Na(+)(out). With respect to regulation, cold receptor activity activated by temperatures between 10-19 degrees Celsius. Ionotropic glutamate receptor that functions as a cation-permeable ligand-gated ion channel, gated by L-glutamate and the glutamatergic agonist kainic acid. L-glutamate acts as an excitatory neurotransmitter at many synapses in the central nervous system. Binding of the excitatory neurotransmitter L-glutamate induces a conformation change, leading to the opening of the cation channel, and thereby converts the chemical signal to an electrical impulse. The receptor then desensitizes rapidly and enters a transient inactive state, characterized by the presence of bound agonist. Modulates cell surface expression of NETO2. In association with GRIK3, involved in presynaptic facilitation of glutamate release at hippocampal mossy fiber synapses. Its function is as follows. Independent of its ionotropic glutamate receptor activity, acts as a thermoreceptor conferring sensitivity to cold temperatures. Functions in dorsal root ganglion neurons. In terms of biological role, ionotropic glutamate receptor that functions as a cation-permeable ligand-gated ion channel, gated by L-glutamate and the glutamatergic agonist kainic acid. The sequence is that of Glutamate receptor ionotropic, kainate 2 (Grik2) from Mus musculus (Mouse).